The primary structure comprises 263 residues: 1-(5-phosphoribosyl)-5-[(5-phosphoribosylamino)methylideneamino] imidazole-4-carboxamide isomerase (263 aa).

Belongs to the HisA/HisF family.

Its subcellular location is the cytoplasm. It catalyses the reaction 1-(5-phospho-beta-D-ribosyl)-5-[(5-phospho-beta-D-ribosylamino)methylideneamino]imidazole-4-carboxamide = 5-[(5-phospho-1-deoxy-D-ribulos-1-ylimino)methylamino]-1-(5-phospho-beta-D-ribosyl)imidazole-4-carboxamide. The protein operates within amino-acid biosynthesis; L-histidine biosynthesis; L-histidine from 5-phospho-alpha-D-ribose 1-diphosphate: step 4/9. This chain is 1-(5-phosphoribosyl)-5-[(5-phosphoribosylamino)methylideneamino] imidazole-4-carboxamide isomerase (HIS6), found in Eremothecium gossypii (strain ATCC 10895 / CBS 109.51 / FGSC 9923 / NRRL Y-1056) (Yeast).